Reading from the N-terminus, the 749-residue chain is Triacylglycerol lipase 5 (749 aa).

The HXXXXD acyltransferase motif motif lies at 54 to 59 (HAISYD). One can recognise a PNPLA domain in the interval 183-388 (LVLSGGSTFG…DNDMPISRLS (206 aa)). Residues 214-218 (GSSAG) carry the GXSXG motif. The Nucleophile role is filled by S216. 5 N-linked (GlcNAc...) asparagine glycosylation sites follow: N270, N289, N297, N304, and N321. The active-site Proton acceptor is the D375. 2 N-linked (GlcNAc...) asparagine glycosylation sites follow: N474 and N589. The interval 585 to 643 (IKSPNKTAAPGRFPLQPLPSPSSTFNKRKMDMLSPSPSPSTSPQRSKSSFTQQGTRQKA) is disordered. A compositionally biased stretch (low complexity) spans 623 to 633 (PSTSPQRSKSS). Residues 634–643 (FTQQGTRQKA) are compositionally biased toward polar residues. Phosphoserine is present on S645. Residues N680, N714, and N742 are each glycosylated (N-linked (GlcNAc...) asparagine).

It localises to the lipid droplet. It catalyses the reaction a triacylglycerol + H2O = a diacylglycerol + a fatty acid + H(+). The enzyme catalyses 1-(9Z-octadecenoyl)-sn-glycero-3-phosphate + (9Z)-octadecenoyl-CoA = 1,2-di-(9Z-octadecenoyl)-sn-glycero-3-phosphate + CoA. The catalysed reaction is 1-(9Z-octadecenoyl)-sn-glycero-3-phosphate + hexadecanoyl-CoA = 1-hexadecanoyl-2-(9Z-octadecenoyl)-sn-glycero-3-phosphate + CoA. Loses its lipolytic activity in cells lacking nonpolar lipids, but retains its side activity as lysophospholipid acyltransferase. Functionally, lipid particle-localized triacylglycerol (TAG) lipase. The lipid droplet/particle is a lipid storage compartment which serves as a depot of energy and building blocks for membrane lipid biosynthesis. Involved in the mobilization of the non-polar storage lipids triacylglycerols (TAGs) from lipid particles by hydrolysis of TAGs, releasing and supplying specific fatty acids to the appropriate metabolic pathways. Also catalyzes the acylation of lysophosphatidic acid (LPA). This chain is Triacylglycerol lipase 5 (TGL5), found in Saccharomyces cerevisiae (strain ATCC 204508 / S288c) (Baker's yeast).